A 578-amino-acid chain; its full sequence is MPRGLELLIAQTILQGFDAQYGRFLEVTSGAQQRFEQADWHAVQLAMKNRIHLYDHHVGLVVEQLRCITNGQSTDAAFLLRVKEHYTRLLPDYPRFEIAESFFNSVYCRLFDHRSLTPERLFIFSSQPERSFRTIPRPLAKDFHPDHGWESLLMRVISDLPLRLRWQNKSRDIHYIIRHLTETLGTDNLAESHLQVANELFYRNKAAWLVGKLITPSGTLPFLLPIHQTDDGELFIDTCLTTTAEASIVFGFARSYFMVYAPLPAALVEWLREILPGKTTAELYMAIGCQKHAKTESYREYLVYLQGCNEQFIEAPGIRGMVMLVFTLPGFDRVFKVIKDKFAPQKEMSAAHVRACYQLVKEHDRVGRMADTQEFENFVLEKRHISPALMELLLQEAAEKITDLGEQIVIRHLYIERRMVPLNIWLEQVEGQQLRDAIEEYGNAIRQLAAANIFPGDMLFKNFGVTRHGRVVFYDYDEICYMTEVNFRDIPPPRYPEDELASEPWYSVSPGDVFPEEFRHWLCADPRIGPLFEEMHADLFRADYWRALQNRIREGHVEDVYAYRRRQRFSVRYGEMLF.

ATP contacts are provided by residues 315–321 and K336; that span reads APGIRGM. D371 is a catalytic residue.

The protein belongs to the AceK family.

It localises to the cytoplasm. The catalysed reaction is L-seryl-[isocitrate dehydrogenase] + ATP = O-phospho-L-seryl-[isocitrate dehydrogenase] + ADP + H(+). Functionally, bifunctional enzyme which can phosphorylate or dephosphorylate isocitrate dehydrogenase (IDH) on a specific serine residue. This is a regulatory mechanism which enables bacteria to bypass the Krebs cycle via the glyoxylate shunt in response to the source of carbon. When bacteria are grown on glucose, IDH is fully active and unphosphorylated, but when grown on acetate or ethanol, the activity of IDH declines drastically concomitant with its phosphorylation. This chain is Isocitrate dehydrogenase kinase/phosphatase, found in Shigella boydii serotype 18 (strain CDC 3083-94 / BS512).